A 181-amino-acid chain; its full sequence is 28 kDa heat- and acid-stable phosphoprotein (181 aa).

A compositionally biased stretch (basic residues) spans Met-1–Ala-14. Positions Met-1–Lys-117 are disordered. Position 18 is a phosphothreonine (Thr-18). Ser-19 is modified (phosphoserine). Residues Glu-30 to Asp-59 show a composition bias toward basic and acidic residues. Lys-52 participates in a covalent cross-link: Glycyl lysine isopeptide (Lys-Gly) (interchain with G-Cter in SUMO2). Phosphoserine occurs at positions 57, 60, and 63. A compositionally biased stretch (acidic residues) spans Ser-60–Asp-69. Tyr-70 carries the post-translational modification Phosphotyrosine. Residues Asp-102–Lys-117 are compositionally biased toward basic and acidic residues. Lys-126 carries the N6-methyllysine modification. 2 positions are modified to N6-acetyllysine: Lys-132 and Lys-164. Residues Glu-151–Ala-167 are compositionally biased toward basic and acidic residues. The interval Glu-151–Lys-181 is disordered. Phosphoserine is present on residues Ser-176 and Ser-178.

Belongs to the PDAP1 family.

In terms of biological role, enhances PDGFA-stimulated cell growth in fibroblasts, but inhibits the mitogenic effect of PDGFB. This is 28 kDa heat- and acid-stable phosphoprotein (PDAP1) from Homo sapiens (Human).